The sequence spans 275 residues: uncharacterized protein (275 aa).

This is an uncharacterized protein from Enterobacteria phage T4 (Bacteriophage T4).